Reading from the N-terminus, the 238-residue chain is 4-hydroxy-tetrahydrodipicolinate reductase (238 aa).

12 to 17 (GASGRM) lines the NAD(+) pocket. Position 40 (Arg40) interacts with NADP(+). Residues 93–95 (GTT) and 117–120 (ASNF) contribute to the NAD(+) site. His149 acts as the Proton donor/acceptor in catalysis. Position 150 (His150) interacts with (S)-2,3,4,5-tetrahydrodipicolinate. Lys153 (proton donor) is an active-site residue. 159–160 (GT) contacts (S)-2,3,4,5-tetrahydrodipicolinate.

This sequence belongs to the DapB family.

It localises to the cytoplasm. It carries out the reaction (S)-2,3,4,5-tetrahydrodipicolinate + NAD(+) + H2O = (2S,4S)-4-hydroxy-2,3,4,5-tetrahydrodipicolinate + NADH + H(+). The catalysed reaction is (S)-2,3,4,5-tetrahydrodipicolinate + NADP(+) + H2O = (2S,4S)-4-hydroxy-2,3,4,5-tetrahydrodipicolinate + NADPH + H(+). The protein operates within amino-acid biosynthesis; L-lysine biosynthesis via DAP pathway; (S)-tetrahydrodipicolinate from L-aspartate: step 4/4. Functionally, catalyzes the conversion of 4-hydroxy-tetrahydrodipicolinate (HTPA) to tetrahydrodipicolinate. This Xanthomonas euvesicatoria pv. vesicatoria (strain 85-10) (Xanthomonas campestris pv. vesicatoria) protein is 4-hydroxy-tetrahydrodipicolinate reductase.